We begin with the raw amino-acid sequence, 138 residues long: Transcription antitermination protein NusB (138 aa).

Belongs to the NusB family.

In terms of biological role, involved in transcription antitermination. Required for transcription of ribosomal RNA (rRNA) genes. Binds specifically to the boxA antiterminator sequence of the ribosomal RNA (rrn) operons. The protein is Transcription antitermination protein NusB of Tolumonas auensis (strain DSM 9187 / NBRC 110442 / TA 4).